The chain runs to 369 residues: Protein FAM187B (369 aa).

The signal sequence occupies residues 1–17 (MPPMLWLLLNFAAPALG). Topologically, residues 18-333 (FYFSISCPSG…PGRADSVLKG (316 aa)) are extracellular. 3 N-linked (GlcNAc...) asparagine glycosylation sites follow: N45, N68, and N130. Residues 334–354 (LKLVLLVGTVLVLLGALLKFI) form a helical membrane-spanning segment. Residues 355–369 (RPSPGKRSKQVLMVK) are Cytoplasmic-facing.

This sequence belongs to the FAM187 family.

It is found in the membrane. This Macaca fascicularis (Crab-eating macaque) protein is Protein FAM187B (FAM187B).